The chain runs to 299 residues: Acetylglutamate kinase (299 aa).

Residues Gly64–Gly65, Arg86, and Asn197 each bind substrate.

This sequence belongs to the acetylglutamate kinase family. ArgB subfamily.

The protein resides in the cytoplasm. It catalyses the reaction N-acetyl-L-glutamate + ATP = N-acetyl-L-glutamyl 5-phosphate + ADP. It functions in the pathway amino-acid biosynthesis; L-arginine biosynthesis; N(2)-acetyl-L-ornithine from L-glutamate: step 2/4. In terms of biological role, catalyzes the ATP-dependent phosphorylation of N-acetyl-L-glutamate. This is Acetylglutamate kinase from Persephonella marina (strain DSM 14350 / EX-H1).